A 101-amino-acid chain; its full sequence is Large ribosomal subunit protein eL21 (101 aa).

The span at 1–18 shows a compositional bias: basic residues; sequence MVKHSRGYRTRSRSLLRK. Residues 1–23 form a disordered region; that stretch reads MVKHSRGYRTRSRSLLRKSPRER.

Belongs to the eukaryotic ribosomal protein eL21 family.

This Saccharolobus islandicus (strain Y.N.15.51 / Yellowstone #2) (Sulfolobus islandicus) protein is Large ribosomal subunit protein eL21.